The sequence spans 558 residues: 2-isopropylmalate synthase (558 aa).

A Pyruvate carboxyltransferase domain is found at 30–303 (PIWCSVDLRD…DPGIDCSDIN (274 aa)). Residues D39, H242, H244, and N278 each coordinate Mg(2+). The segment at 437-558 (QPGARLKFLD…ANRIVGRKAR (122 aa)) is regulatory domain.

Belongs to the alpha-IPM synthase/homocitrate synthase family. LeuA type 2 subfamily. Homodimer. Mg(2+) is required as a cofactor.

It localises to the cytoplasm. The enzyme catalyses 3-methyl-2-oxobutanoate + acetyl-CoA + H2O = (2S)-2-isopropylmalate + CoA + H(+). It participates in amino-acid biosynthesis; L-leucine biosynthesis; L-leucine from 3-methyl-2-oxobutanoate: step 1/4. Its function is as follows. Catalyzes the condensation of the acetyl group of acetyl-CoA with 3-methyl-2-oxobutanoate (2-ketoisovalerate) to form 3-carboxy-3-hydroxy-4-methylpentanoate (2-isopropylmalate). The protein is 2-isopropylmalate synthase of Mesorhizobium japonicum (strain LMG 29417 / CECT 9101 / MAFF 303099) (Mesorhizobium loti (strain MAFF 303099)).